Consider the following 511-residue polypeptide: 2-isopropylmalate synthase (511 aa).

The Pyruvate carboxyltransferase domain maps to 5 to 267 (LIVFDTTLRD…DTNVDISQIV (263 aa)). Residues D14, H202, H204, and N238 each coordinate Mn(2+). The regulatory domain stretch occupies residues 393 to 511 (KLSWLKVVSE…YPVERAYPQV (119 aa)).

This sequence belongs to the alpha-IPM synthase/homocitrate synthase family. LeuA type 1 subfamily. As to quaternary structure, homodimer. Mn(2+) is required as a cofactor.

The protein localises to the cytoplasm. The catalysed reaction is 3-methyl-2-oxobutanoate + acetyl-CoA + H2O = (2S)-2-isopropylmalate + CoA + H(+). It participates in amino-acid biosynthesis; L-leucine biosynthesis; L-leucine from 3-methyl-2-oxobutanoate: step 1/4. Its function is as follows. Catalyzes the condensation of the acetyl group of acetyl-CoA with 3-methyl-2-oxobutanoate (2-ketoisovalerate) to form 3-carboxy-3-hydroxy-4-methylpentanoate (2-isopropylmalate). The polypeptide is 2-isopropylmalate synthase (Nitrosococcus oceani (strain ATCC 19707 / BCRC 17464 / JCM 30415 / NCIMB 11848 / C-107)).